A 447-amino-acid polypeptide reads, in one-letter code: MDIFSEKRILTVSQLTSLIRGVLEENFEHVWVEGEVSNLATPASGHLYFTLKDGAAQIRCVMFRASSRALKFRPRDGMGLIVRGRVTVYDQRGEYQLLVEYLEPRGIGALQLAFIQLKEQLAREGLFADEHKKPIPPLPQKIGVVTSATGAAIHDILTVLNRRFANVEILIRPVKVQGEGAAEEIAAAIDDFNRYGVIDVMIVGRGGGSLEDLWAFNEEMVARAIHRSRIPVISAVGHEVDFTIADFVADLRAPTPSAAAELVVKSKEELAARLEFLRHRLVQGGRQVLAERRGELDSLNRSLRDPSMLVGHLSQRVDDLSARLERGTANSVRRHRGSLDLLTTNLRLTNPAVRLERARERVIALAGRNETLLRRFLDHLREKTLVAAARLDTLSPLATMARGYSIVLKLPERCLVTDSARLAPGDRVELCLRRGRAGCCVESSSDT.

It belongs to the XseA family. As to quaternary structure, heterooligomer composed of large and small subunits.

It is found in the cytoplasm. The catalysed reaction is Exonucleolytic cleavage in either 5'- to 3'- or 3'- to 5'-direction to yield nucleoside 5'-phosphates.. Its function is as follows. Bidirectionally degrades single-stranded DNA into large acid-insoluble oligonucleotides, which are then degraded further into small acid-soluble oligonucleotides. In Geobacter sulfurreducens (strain ATCC 51573 / DSM 12127 / PCA), this protein is Exodeoxyribonuclease 7 large subunit.